The primary structure comprises 566 residues: Good for full DBP5 activity protein 2 (566 aa).

The segment covering 1–16 (MQVQKMVRDNSNNGSD) has biased composition (polar residues). The segment at 1-41 (MQVQKMVRDNSNNGSDKSVHWERRNNNGAGPRYRSRSGNTG) is disordered.

Functionally, high-copy suppressor of DBP5 mutation. The protein is Good for full DBP5 activity protein 2 (GFD2) of Saccharomyces cerevisiae (strain ATCC 204508 / S288c) (Baker's yeast).